The sequence spans 189 residues: uncharacterized protein (189 aa).

Positions 105-115 (EKLEKEEESKT) are enriched in basic and acidic residues. The tract at residues 105–189 (EKLEKEEESK…TDDEKTEVST (85 aa)) is disordered. Basic residues predominate over residues 116 to 136 (AKKRAKRLRQKAAAKKRKLTK). The segment covering 141–151 (SDESSSDDSDS) has biased composition (acidic residues). Residues 161–177 (SEGKQNTEVEDKDKVEK) show a composition bias toward basic and acidic residues. Residues 178 to 189 (EETDDEKTEVST) show a composition bias toward acidic residues.

This is an uncharacterized protein from Caenorhabditis elegans.